A 130-amino-acid polypeptide reads, in one-letter code: Mediator of RNA polymerase II transcription subunit 10 (130 aa).

Belongs to the Mediator complex subunit 10 family. In terms of assembly, component of the Mediator complex.

It is found in the nucleus. Component of the Mediator complex, a coactivator involved in the regulated transcription of nearly all RNA polymerase II-dependent genes. Mediator functions as a bridge to convey information from gene-specific regulatory proteins to the basal RNA polymerase II transcription machinery. Mediator is recruited to promoters by direct interactions with regulatory proteins and serves as a scaffold for the assembly of a functional preinitiation complex with RNA polymerase II and the general transcription factors. The polypeptide is Mediator of RNA polymerase II transcription subunit 10 (MED10) (Anopheles gambiae (African malaria mosquito)).